Here is a 278-residue protein sequence, read N- to C-terminus: Ribosomal RNA small subunit methyltransferase A (278 aa).

Residues N28, L30, G55, E77, D103, and N122 each contribute to the S-adenosyl-L-methionine site.

The protein belongs to the class I-like SAM-binding methyltransferase superfamily. rRNA adenine N(6)-methyltransferase family. RsmA subfamily.

It localises to the cytoplasm. The catalysed reaction is adenosine(1518)/adenosine(1519) in 16S rRNA + 4 S-adenosyl-L-methionine = N(6)-dimethyladenosine(1518)/N(6)-dimethyladenosine(1519) in 16S rRNA + 4 S-adenosyl-L-homocysteine + 4 H(+). Its function is as follows. Specifically dimethylates two adjacent adenosines (A1518 and A1519) in the loop of a conserved hairpin near the 3'-end of 16S rRNA in the 30S particle. May play a critical role in biogenesis of 30S subunits. In Cereibacter sphaeroides (strain ATCC 17029 / ATH 2.4.9) (Rhodobacter sphaeroides), this protein is Ribosomal RNA small subunit methyltransferase A.